Reading from the N-terminus, the 887-residue chain is UPF0182 protein CTC_00086 (887 aa).

The next 7 helical transmembrane spans lie at 9 to 29 (FIAIIILLLILFLYRSTSFII), 47 to 67 (FFTIGKLFTLSFALIFISIWL), 87 to 107 (LMIAFNCIVSSLFAYFFSSKY), 146 to 166 (VLILRVLVFLVIYTLILYFII), 195 to 215 (GKQLAVVSAIILLFLSMGYII), 242 to 262 (IYRIIIIVSFIGSIVVFISII), and 266 to 286 (IKPIIISLVLIFLLILSEGAT).

The protein belongs to the UPF0182 family.

It localises to the cell membrane. This chain is UPF0182 protein CTC_00086, found in Clostridium tetani (strain Massachusetts / E88).